Here is an 89-residue protein sequence, read N- to C-terminus: Small ribosomal subunit protein uS15 (89 aa).

This sequence belongs to the universal ribosomal protein uS15 family. In terms of assembly, part of the 30S ribosomal subunit. Forms a bridge to the 50S subunit in the 70S ribosome, contacting the 23S rRNA.

In terms of biological role, one of the primary rRNA binding proteins, it binds directly to 16S rRNA where it helps nucleate assembly of the platform of the 30S subunit by binding and bridging several RNA helices of the 16S rRNA. Its function is as follows. Forms an intersubunit bridge (bridge B4) with the 23S rRNA of the 50S subunit in the ribosome. This chain is Small ribosomal subunit protein uS15, found in Oceanobacillus iheyensis (strain DSM 14371 / CIP 107618 / JCM 11309 / KCTC 3954 / HTE831).